A 318-amino-acid chain; its full sequence is NADH-ubiquinone oxidoreductase chain 1 (318 aa).

A run of 8 helical transmembrane segments spans residues 2-22 (PMIN…FLML), 76-96 (ALAL…IPLI), 100-120 (LGLL…LWSG), 146-166 (LALI…SALI), 171-191 (HSWL…STLA), 222-242 (LFFM…TMIF), 253-273 (ELYT…FLWI), and 294-314 (LPLT…TSGI).

Belongs to the complex I subunit 1 family. As to quaternary structure, core subunit of respiratory chain NADH dehydrogenase (Complex I) which is composed of 45 different subunits.

Its subcellular location is the mitochondrion inner membrane. The enzyme catalyses a ubiquinone + NADH + 5 H(+)(in) = a ubiquinol + NAD(+) + 4 H(+)(out). In terms of biological role, core subunit of the mitochondrial membrane respiratory chain NADH dehydrogenase (Complex I) which catalyzes electron transfer from NADH through the respiratory chain, using ubiquinone as an electron acceptor. Essential for the catalytic activity and assembly of complex I. This Pongo abelii (Sumatran orangutan) protein is NADH-ubiquinone oxidoreductase chain 1 (MT-ND1).